The sequence spans 596 residues: ATP-binding protein Uup (596 aa).

ABC transporter domains lie at 1–222 (MSLI…RIEK) and 290–516 (FKLD…SKIN). Residues 36 to 43 (GKNGAGKS) and 322 to 329 (GDNGCGKS) each bind ATP. Positions 519–596 (IKIKNNFKKE…LEKNIINTKI (78 aa)) are C-terminal domain (CTD), binds DNA.

Belongs to the ABC transporter superfamily. ABCF family. Uup subfamily.

It localises to the cytoplasm. The enzyme catalyses ATP + H2O = ADP + phosphate + H(+). In terms of biological role, probably plays a role in ribosome assembly or function. May be involved in resolution of branched DNA intermediates that result from template switching in postreplication gaps. Binds DNA and has ATPase activity. This chain is ATP-binding protein Uup, found in Buchnera aphidicola subsp. Acyrthosiphon pisum (strain APS) (Acyrthosiphon pisum symbiotic bacterium).